Reading from the N-terminus, the 118-residue chain is Large ribosomal subunit protein uL24 (118 aa).

Belongs to the universal ribosomal protein uL24 family. Part of the 50S ribosomal subunit.

One of two assembly initiator proteins, it binds directly to the 5'-end of the 23S rRNA, where it nucleates assembly of the 50S subunit. In terms of biological role, one of the proteins that surrounds the polypeptide exit tunnel on the outside of the subunit. The sequence is that of Large ribosomal subunit protein uL24 from Parasynechococcus marenigrum (strain WH8102).